The following is a 230-amino-acid chain: Acyl-protein thioesterase 1 (230 aa).

Active-site charge relay system residues include S119, D174, and H208. K224 is subject to N6-acetyllysine.

It belongs to the AB hydrolase superfamily. AB hydrolase 2 family. Homodimer. As to expression, platelets.

Its subcellular location is the cytoplasm. The protein resides in the cell membrane. It localises to the nucleus membrane. It is found in the endoplasmic reticulum. The enzyme catalyses S-hexadecanoyl-L-cysteinyl-[protein] + H2O = L-cysteinyl-[protein] + hexadecanoate + H(+). It catalyses the reaction 1-hexadecanoyl-sn-glycero-3-phosphocholine + H2O = sn-glycerol 3-phosphocholine + hexadecanoate + H(+). The catalysed reaction is a 1-(9Z-octadecenoyl)-2-acyl-sn-glycero-3-phosphocholine + H2O = a 2-acyl-sn-glycero-3-phosphocholine + (9Z)-octadecenoate + H(+). With respect to regulation, inhibited by palmostatin-B, leading to impair depalmitoylating of Ras. Functionally, acts as an acyl-protein thioesterase. Hydrolyzes fatty acids from S-acylated cysteine residues in proteins such as trimeric G alpha proteins or HRAS. Acts as a palmitoyl thioesterase that catalyzes depalmitoylation of proteins, such as ADRB2, KCNMA1 and SQSTM1. Acts as a negative regulator of autophagy by mediating palmitoylation of SQSTM1, decreasing affinity between SQSTM1 and ATG8 proteins and recruitment of ubiquitinated cargo proteins to autophagosomes. Acts as a lysophospholipase and hydrolyzes lysophosphatidylcholine (lyso-PC). Also hydrolyzes lysophosphatidylethanolamine (lyso-PE), lysophosphatidylinositol (lyso-PI) and lysophosphatidylserine (lyso-PS). Has much higher thioesterase activity than lysophospholipase activity. Contributes to the production of lysophosphatidic acid (LPA) during blood coagulation by recognizing and cleaving plasma phospholipids to generate lysophospholipids which in turn act as substrates for ENPP2 to produce LPA. The protein is Acyl-protein thioesterase 1 (LYPLA1) of Homo sapiens (Human).